The sequence spans 228 residues: Homeobox-leucine zipper protein ATHB-53 (228 aa).

Residues aspartate 36 to aspartate 62 form a disordered region. Basic residues predominate over residues valine 44 to lysine 53. The segment at residues glycine 68–lysine 127 is a DNA-binding region (homeobox). Residues leucine 128 to leucine 156 are leucine-zipper.

The protein belongs to the HD-ZIP homeobox family. Class I subfamily. As to expression, expressed in root meristem, late flowers and siliques.

The protein localises to the nucleus. Functionally, probable transcription factor that may play a regulatory role in auxin/cytokinin signaling during root development. The protein is Homeobox-leucine zipper protein ATHB-53 (ATHB-53) of Arabidopsis thaliana (Mouse-ear cress).